We begin with the raw amino-acid sequence, 208 residues long: Small ribosomal subunit protein uS4 (208 aa).

The tract at residues 24 to 52 (GVKPFDVKTKKANKAPGQHGQARGGKQSE) is disordered. The S4 RNA-binding domain occupies 98–160 (SRLDNVVYRM…AKQQLRIKNA (63 aa)).

This sequence belongs to the universal ribosomal protein uS4 family. As to quaternary structure, part of the 30S ribosomal subunit. Contacts protein S5. The interaction surface between S4 and S5 is involved in control of translational fidelity.

Its function is as follows. One of the primary rRNA binding proteins, it binds directly to 16S rRNA where it nucleates assembly of the body of the 30S subunit. With S5 and S12 plays an important role in translational accuracy. In Acinetobacter baumannii (strain ATCC 17978 / DSM 105126 / CIP 53.77 / LMG 1025 / NCDC KC755 / 5377), this protein is Small ribosomal subunit protein uS4.